The sequence spans 77 residues: uncharacterized protein (77 aa).

Residues 53–77 (KRVSSEANKEKSDITELLRKQVRPD) are disordered.

This is an uncharacterized protein from Escherichia coli (strain K12).